The primary structure comprises 359 residues: Alkanal monooxygenase alpha chain (359 aa).

Belongs to the bacterial luciferase oxidoreductase family. Heterodimer of an alpha and a beta chain.

It catalyses the reaction a long-chain fatty aldehyde + FMNH2 + O2 = a long-chain fatty acid + hnu + FMN + H2O + 2 H(+). In terms of biological role, light-emitting reaction in luminous bacteria. This is Alkanal monooxygenase alpha chain (luxA) from Photorhabdus laumondii subsp. laumondii (strain DSM 15139 / CIP 105565 / TT01) (Photorhabdus luminescens subsp. laumondii).